A 49-amino-acid chain; its full sequence is Large ribosomal subunit protein bL33C (49 aa).

This sequence belongs to the bacterial ribosomal protein bL33 family.

The protein is Large ribosomal subunit protein bL33C of Bacillus pumilus (strain SAFR-032).